Consider the following 266-residue polypeptide: Methylsterol monooxygenase 2-2 (266 aa).

Transmembrane regions (helical) follow at residues 24–44, 71–91, and 107–127; these read IGSFLLHESVFFLSGLPFIFL, RLLLYHFSVNLPLMLASYPVF, and EVSAQILFYFIIEDFVFYWGH. The region spanning 113 to 247 is the Fatty acid hydroxylase domain; sequence LFYFIIEDFV…FVYMDWIFGT (135 aa). The Histidine box-1 motif lies at 127–131; the sequence is HRILH. A Histidine box-2 motif is present at residues 140–144; that stretch reads HSVHH. Residues 162–182 form a helical membrane-spanning segment; that stretch reads ILFLGFATIVGPALTGPHLIT. The short motif at 219–225 is the Histidine box-3 element; the sequence is FHDYHHR.

The protein belongs to the sterol desaturase family. Fe cation is required as a cofactor. In terms of tissue distribution, expressed in shoots, roots, siliques and flowers, and, slightly, in developing seeds.

The protein resides in the endoplasmic reticulum membrane. The enzyme catalyses 4,4-dimethyl-5alpha-cholest-7-en-3beta-ol + 6 Fe(II)-[cytochrome b5] + 3 O2 + 5 H(+) = 4alpha-carboxy-4beta-methyl-5alpha-cholest-7-ene-3beta-ol + 6 Fe(III)-[cytochrome b5] + 4 H2O. It catalyses the reaction 24-methylidenelophenol + 6 Fe(II)-[cytochrome b5] + 3 O2 + 5 H(+) = 4alpha-carboxy-ergosta-7,24(24(1))-dien-3beta-ol + 6 Fe(III)-[cytochrome b5] + 4 H2O. Functionally, non-heme iron oxygenase involved in sterols biosynthesis by catalyzing the removal of the second methyl group at the C-4 position. 24-ethylidenelophenol and 24-ethyllophenol are the preferred substrates. Together with SMO2-1, required during embryogenesis, probably by maintaining sterols and auxin homeostasis. This Arabidopsis thaliana (Mouse-ear cress) protein is Methylsterol monooxygenase 2-2.